The following is a 130-amino-acid chain: Small ribosomal subunit protein uS11 (130 aa).

Belongs to the universal ribosomal protein uS11 family. As to quaternary structure, part of the 30S ribosomal subunit. Interacts with proteins S7 and S18. Binds to IF-3.

Located on the platform of the 30S subunit, it bridges several disparate RNA helices of the 16S rRNA. Forms part of the Shine-Dalgarno cleft in the 70S ribosome. The protein is Small ribosomal subunit protein uS11 of Prochlorococcus marinus (strain MIT 9301).